A 723-amino-acid polypeptide reads, in one-letter code: MSESSASALQLGRPSRQPAVHPENLSLDASCFSSPPVNFLQELPSYRSIARRRTTVHSRDKQSGTLLKSTDSYSSQLEDRIAENLSSQSLRNYALNISEKRRLRDIQETQMKYLSEWDQWKRYSSKSWKRFLEKAREMTTHLELWREDIRSIEGKFGTGIQSYFSFLRFLVLLNLVIFLIIFMLVLLPILLTKYKITNSSFVLIPFKDTDIQCTVYPVSSSGLIYFYSYIIDLLSGTGFLEETSLFYGHYTIDGVKFQNFTYDLPLAYLISTIAYLALSLLWIVKRSVEGFKINLIRSEEHFQSYCNKIFAGWDFCITNRSMADLKHSSLRYELRADLEEERIRQKIAERTSEETIRIYSLRLFLNCIVLAVLGACFYAIYVATVFSQEHMKKEIDKMVFGENLLILYLPSIVITLANFITPMIFAKIIRYEDYSPGFEIRLTILRCVFMRLATICVLVFTLGSKITSCDDDTCDLCGYNQKLYPCWETQVGQEMYKLMIFDFIIILAVTLFVDFPRKLLVTYCSSWKLIQCWGQQEFAIPDNVLGIVYGQTICWIGAFFSPLLPAIATLKFIIIFYVKEWSLLYTCRPSPRPFRASNSNFFFLLVLLIGLCLAIIPLTISISRIPSSKACGPFTNFNTTWEVIPKTVSTFPSSLQSFIHGVTSEAFAVPFFMIICLIMFYFIALAGAHKRVVIQLREQLSLESRDKRYLIQKLTEAQRDTRN.

The segment at 1-21 is disordered; that stretch reads MSESSASALQLGRPSRQPAVH. At 1–168 the chain is on the extracellular side; the sequence is MSESSASALQ…GIQSYFSFLR (168 aa). The N-linked (GlcNAc...) asparagine glycan is linked to N24. Residues 51–70 are disordered; that stretch reads RRRTTVHSRDKQSGTLLKST. N-linked (GlcNAc...) asparagine glycosylation is present at N84. S89 bears the Phosphoserine mark. Residue N96 is glycosylated (N-linked (GlcNAc...) asparagine). A helical transmembrane segment spans residues 169-189; sequence FLVLLNLVIFLIIFMLVLLPI. Topologically, residues 190–219 are cytoplasmic; the sequence is LLTKYKITNSSFVLIPFKDTDIQCTVYPVS. The chain crosses the membrane as a helical span at residues 220–240; the sequence is SSGLIYFYSYIIDLLSGTGFL. Residues 241 to 263 lie on the Extracellular side of the membrane; that stretch reads EETSLFYGHYTIDGVKFQNFTYD. Residue N259 is glycosylated (N-linked (GlcNAc...) asparagine). The helical transmembrane segment at 264 to 284 threads the bilayer; it reads LPLAYLISTIAYLALSLLWIV. Over 285–362 the chain is Cytoplasmic; it reads KRSVEGFKIN…EETIRIYSLR (78 aa). Residues 363–383 form a helical membrane-spanning segment; the sequence is LFLNCIVLAVLGACFYAIYVA. Over 384-404 the chain is Extracellular; the sequence is TVFSQEHMKKEIDKMVFGENL. A helical transmembrane segment spans residues 405 to 425; that stretch reads LILYLPSIVITLANFITPMIF. Residues 426-494 lie on the Cytoplasmic side of the membrane; that stretch reads AKIIRYEDYS…PCWETQVGQE (69 aa). Residues 495–515 traverse the membrane as a helical segment; sequence MYKLMIFDFIIILAVTLFVDF. At 516–555 the chain is on the extracellular side; the sequence is PRKLLVTYCSSWKLIQCWGQQEFAIPDNVLGIVYGQTICW. The helical transmembrane segment at 556-576 threads the bilayer; it reads IGAFFSPLLPAIATLKFIIIF. Residues 577 to 601 are Cytoplasmic-facing; the sequence is YVKEWSLLYTCRPSPRPFRASNSNF. Residues 602–622 form a helical membrane-spanning segment; sequence FFLLVLLIGLCLAIIPLTISI. Topologically, residues 623–665 are extracellular; sequence SRIPSSKACGPFTNFNTTWEVIPKTVSTFPSSLQSFIHGVTSE. The N-linked (GlcNAc...) asparagine glycan is linked to N638. Residues 666 to 686 traverse the membrane as a helical segment; it reads AFAVPFFMIICLIMFYFIALA. Over 687-723 the chain is Cytoplasmic; it reads GAHKRVVIQLREQLSLESRDKRYLIQKLTEAQRDTRN.

It belongs to the TMC family. In terms of assembly, interacts with PIEZO2; the interaction inhibits PIEZO2-conducted mechanically activated currents.

The protein resides in the membrane. Its function is as follows. Acts as an inhibitory modulator of PIEZO2 mechanosensitive channel in dorsal root ganglion (DRG) neurons through physical interactions or interference with the interaction between Piezo2 and the cytoskeleton. This Macaca fascicularis (Crab-eating macaque) protein is Transmembrane channel-like protein 7 (TMC7).